The sequence spans 514 residues: Peptide chain release factor 3 (514 aa).

Residues 8 to 268 (KKRRTFAIIS…TFLKFAPEPH (261 aa)) form the tr-type G domain. Residues 17 to 24 (SHPDAGKT), 85 to 89 (DTPGH), and 139 to 142 (NKLD) contribute to the GTP site.

It belongs to the TRAFAC class translation factor GTPase superfamily. Classic translation factor GTPase family. PrfC subfamily.

The protein resides in the cytoplasm. Increases the formation of ribosomal termination complexes and stimulates activities of RF-1 and RF-2. It binds guanine nucleotides and has strong preference for UGA stop codons. It may interact directly with the ribosome. The stimulation of RF-1 and RF-2 is significantly reduced by GTP and GDP, but not by GMP. This is Peptide chain release factor 3 from Streptococcus thermophilus (strain CNRZ 1066).